The primary structure comprises 398 residues: Elongation factor Tu (398 aa).

One can recognise a tr-type G domain in the interval 10–207 (KPHVNIGTIG…TVDEYIPEPE (198 aa)). The interval 19 to 26 (GHVDHGKT) is G1. 19-26 (GHVDHGKT) is a GTP binding site. T26 is a Mg(2+) binding site. Residues 63-67 (GITIN) are G2. The tract at residues 84–87 (DAPG) is G3. GTP-binding positions include 84–88 (DAPGH) and 139–142 (NKVD). Residues 139–142 (NKVD) are G4. Positions 177–179 (SAL) are G5.

Belongs to the TRAFAC class translation factor GTPase superfamily. Classic translation factor GTPase family. EF-Tu/EF-1A subfamily. Monomer.

Its subcellular location is the cytoplasm. The enzyme catalyses GTP + H2O = GDP + phosphate + H(+). GTP hydrolase that promotes the GTP-dependent binding of aminoacyl-tRNA to the A-site of ribosomes during protein biosynthesis. This is Elongation factor Tu from Streptococcus sanguinis (strain SK36).